A 529-amino-acid chain; its full sequence is Bifunctional purine biosynthesis protein PurH (529 aa).

The 148-residue stretch at 1–148 folds into the MGS-like domain; sequence MQQRRPVRRA…KNHKDVAIVV (148 aa).

This sequence belongs to the PurH family.

It catalyses the reaction (6R)-10-formyltetrahydrofolate + 5-amino-1-(5-phospho-beta-D-ribosyl)imidazole-4-carboxamide = 5-formamido-1-(5-phospho-D-ribosyl)imidazole-4-carboxamide + (6S)-5,6,7,8-tetrahydrofolate. The catalysed reaction is IMP + H2O = 5-formamido-1-(5-phospho-D-ribosyl)imidazole-4-carboxamide. It functions in the pathway purine metabolism; IMP biosynthesis via de novo pathway; 5-formamido-1-(5-phospho-D-ribosyl)imidazole-4-carboxamide from 5-amino-1-(5-phospho-D-ribosyl)imidazole-4-carboxamide (10-formyl THF route): step 1/1. The protein operates within purine metabolism; IMP biosynthesis via de novo pathway; IMP from 5-formamido-1-(5-phospho-D-ribosyl)imidazole-4-carboxamide: step 1/1. The sequence is that of Bifunctional purine biosynthesis protein PurH from Salmonella paratyphi B (strain ATCC BAA-1250 / SPB7).